Here is a 131-residue protein sequence, read N- to C-terminus: Torsin-1A-interacting protein 2, isoform IFRG15 (131 aa).

In Homo sapiens (Human), this protein is Torsin-1A-interacting protein 2, isoform IFRG15 (TOR1AIP2).